Reading from the N-terminus, the 439-residue chain is Ribosomal protein uS12 methylthiotransferase RimO (439 aa).

Positions Pro-5–Pro-115 constitute an MTTase N-terminal domain. [4Fe-4S] cluster contacts are provided by Cys-14, Cys-50, Cys-79, Cys-146, Cys-150, and Cys-153. The Radical SAM core domain occupies Leu-132–Arg-369. One can recognise a TRAM domain in the interval Lys-372–Gly-438.

Belongs to the methylthiotransferase family. RimO subfamily. [4Fe-4S] cluster serves as cofactor.

The protein resides in the cytoplasm. The enzyme catalyses L-aspartate(89)-[ribosomal protein uS12]-hydrogen + (sulfur carrier)-SH + AH2 + 2 S-adenosyl-L-methionine = 3-methylsulfanyl-L-aspartate(89)-[ribosomal protein uS12]-hydrogen + (sulfur carrier)-H + 5'-deoxyadenosine + L-methionine + A + S-adenosyl-L-homocysteine + 2 H(+). Catalyzes the methylthiolation of an aspartic acid residue of ribosomal protein uS12. The protein is Ribosomal protein uS12 methylthiotransferase RimO of Bradyrhizobium diazoefficiens (strain JCM 10833 / BCRC 13528 / IAM 13628 / NBRC 14792 / USDA 110).